Here is a 188-residue protein sequence, read N- to C-terminus: ATP-dependent protease subunit HslV (188 aa).

Residue Thr-7 is part of the active site. Na(+) contacts are provided by Gly-162, Cys-165, and Ser-168.

It belongs to the peptidase T1B family. HslV subfamily. In terms of assembly, a double ring-shaped homohexamer of HslV is capped on each side by a ring-shaped HslU homohexamer. The assembly of the HslU/HslV complex is dependent on binding of ATP.

The protein resides in the cytoplasm. It catalyses the reaction ATP-dependent cleavage of peptide bonds with broad specificity.. Its activity is regulated as follows. Allosterically activated by HslU binding. In terms of biological role, protease subunit of a proteasome-like degradation complex believed to be a general protein degrading machinery. This is ATP-dependent protease subunit HslV from Thiobacillus denitrificans (strain ATCC 25259 / T1).